Reading from the N-terminus, the 100-residue chain is NAD(P)H-quinone oxidoreductase subunit 4L, chloroplastic (100 aa).

3 helical membrane-spanning segments follow: residues 1–21 (MLEH…FGLI), 29–49 (ALMC…TFSN), and 60–80 (IFAI…LAIV).

This sequence belongs to the complex I subunit 4L family. In terms of assembly, NDH is composed of at least 16 different subunits, 5 of which are encoded in the nucleus.

It is found in the plastid. Its subcellular location is the chloroplast thylakoid membrane. The catalysed reaction is a plastoquinone + NADH + (n+1) H(+)(in) = a plastoquinol + NAD(+) + n H(+)(out). It carries out the reaction a plastoquinone + NADPH + (n+1) H(+)(in) = a plastoquinol + NADP(+) + n H(+)(out). Functionally, NDH shuttles electrons from NAD(P)H:plastoquinone, via FMN and iron-sulfur (Fe-S) centers, to quinones in the photosynthetic chain and possibly in a chloroplast respiratory chain. The immediate electron acceptor for the enzyme in this species is believed to be plastoquinone. Couples the redox reaction to proton translocation, and thus conserves the redox energy in a proton gradient. The chain is NAD(P)H-quinone oxidoreductase subunit 4L, chloroplastic from Physcomitrium patens (Spreading-leaved earth moss).